A 360-amino-acid polypeptide reads, in one-letter code: Squamosa promoter-binding-like protein 7 (360 aa).

The segment covering 74-89 (AQGSGGGGGGGGGGSA) has biased composition (gly residues). The tract at residues 74–98 (AQGSGGGGGGGGGGSADQGKRKEKA) is disordered. The segment at 105-182 (VPRCQVEGCD…AGHNERRRRS (78 aa)) adopts an SBP-type zinc-finger fold. Zn(2+)-binding residues include Cys108, Cys113, Cys130, His133, Cys149, Cys152, His156, and Cys168. Residues 165-181 (KKSCRRRLAGHNERRRR) carry the Bipartite nuclear localization signal motif. Residues 172–182 (LAGHNERRRRS) show a composition bias toward basic residues. Disordered regions lie at residues 172–196 (LAGHNERRRRSNASEAMARGSAHPH), 261–306 (FFSD…HEHQ), and 320–360 (AAGG…ARVV).

As to expression, expressed in young panicles.

The protein localises to the nucleus. Functionally, trans-acting factor that binds specifically to the consensus nucleotide sequence 5'-TNCGTACAA-3'. May be involved in panicle development. This is Squamosa promoter-binding-like protein 7 (SPL7) from Oryza sativa subsp. indica (Rice).